The chain runs to 232 residues: Small ribosomal subunit protein uS3 (232 aa).

A KH type-2 domain is found at 39–107 (IRAFLKKKLY…EVNVNIKEER (69 aa)). Residues 212-232 (VQPEKTEDDAPKKTRRPRRGK) are disordered. Residues 213–223 (QPEKTEDDAPK) show a composition bias toward basic and acidic residues.

The protein belongs to the universal ribosomal protein uS3 family. In terms of assembly, part of the 30S ribosomal subunit. Forms a tight complex with proteins S10 and S14.

Binds the lower part of the 30S subunit head. Binds mRNA in the 70S ribosome, positioning it for translation. This is Small ribosomal subunit protein uS3 from Campylobacter curvus (strain 525.92).